Reading from the N-terminus, the 614-residue chain is High-affinity choline transporter 1 (614 aa).

The chain crosses the membrane as a helical span at residues 6 to 26 (GVVSIVLFYLLILVVGIWAGR). The Cytoplasmic portion of the chain corresponds to 27 to 44 (KKQSGNDSEEEVMLAGRS). Residues 45–65 (IGLFVGIFTMTATWVGGGYIN) form a helical membrane-spanning segment. At 66–75 (GTAEAIYTSG) the chain is on the extracellular side. Residues 76-96 (LVWCQAPFGYALSLVFGGIFF) form a helical membrane-spanning segment. The Cytoplasmic segment spans residues 97–119 (ANPMRKQGYITMLDPLQDSFGER). Residues 120 to 140 (MGGLLFLPALCGEVFWAAGIL) form a helical membrane-spanning segment. The Extracellular portion of the chain corresponds to 141–158 (AALGATLSVIIDMDHRTS). Residues 159 to 179 (VILSSCIAIFYTLFGGLYSVA) form a helical membrane-spanning segment. Topologically, residues 180–185 (YTDVIQ) are cytoplasmic. A helical transmembrane segment spans residues 186-206 (LFCIFIGLWMCIPFAWSNEHV). Over 207–225 (GSLSDLEVDWIGHVEPKKH) the chain is Extracellular. The chain crosses the membrane as a helical span at residues 226–246 (WLYIDYGLLLVFGGIPWQVYF). Over 247–262 (QRVLSSKTAGRAQLLS) the chain is Cytoplasmic. A helical transmembrane segment spans residues 263 to 283 (YVAAAGCILMAIPPVLIGAIA). Over 284-305 (KATPWNETDYKGPYPLTVDETS) the chain is Extracellular. An N-linked (GlcNAc...) asparagine glycan is attached at Asn289. Residues 306 to 326 (MILPMVLQYLTPDFVSFFGLG) traverse the membrane as a helical segment. At 327 to 364 (AVSAAVMSSADSSVLSAASMFARNVYKLIFRQKASEME) the chain is on the cytoplasmic side. The helical transmembrane segment at 365–385 (IIWVMRVAIIVVGILATIMAL) threads the bilayer. The Extracellular portion of the chain corresponds to 386-394 (TIPSIYGLW). Residues 395-415 (SMCSDLVYVILFPQLLMVVHF) traverse the membrane as a helical segment. At 416-424 (KKHCNTYGS) the chain is on the cytoplasmic side. The chain crosses the membrane as a helical span at residues 425-445 (LSAYIVALAIRLSGGEAILGL). Residues 446–467 (APLIKYPGYDEETKEQMFPFRT) are Extracellular-facing. A helical transmembrane segment spans residues 468–488 (MAMLLSLVTLISVSWWTKMMF). At 489–614 (ESGKLPPSYD…PTAEQDNTAF (126 aa)) the chain is on the cytoplasmic side. The segment at 583 to 614 (ATGVKPSGGGGGHLQSQSGMAMPTAEQDNTAF) is disordered.

It belongs to the sodium:solute symporter (SSF) (TC 2.A.21) family.

It localises to the membrane. Functionally, imports choline from the extracellular space to the neuron with high affinity. Rate-limiting step in acetylcholine synthesis. Sodium ion and chloride ion dependent. This chain is High-affinity choline transporter 1, found in Drosophila melanogaster (Fruit fly).